The primary structure comprises 267 residues: DNA damage-regulated autophagy modulator protein 2 (267 aa).

A run of 6 helical transmembrane segments spans residues 8–28 (LSFL…FSYI), 53–73 (RCLF…TIYV), 87–107 (LIIK…LGLS), 118–138 (FIVH…YMFV), 160–180 (LLLV…SSIL), and 203–223 (VLHI…FGFF).

Belongs to the DRAM/TMEM150 family.

The protein resides in the lysosome membrane. Its subcellular location is the photoreceptor inner segment. The protein localises to the apical cell membrane. Functionally, plays a role in the initiation of autophagy. In the retina, might be involved in the process of photoreceptor cells renewal and recycling to preserve visual function. Induces apoptotic cell death when coexpressed with DRAM1. In Rattus norvegicus (Rat), this protein is DNA damage-regulated autophagy modulator protein 2 (Dram2).